The sequence spans 116 residues: Protein Rev (116 aa).

At S5 the chain carries Phosphoserine; by host CK2. The tract at residues 18–26 (YIKILYQSN) is homomultimerization. A Nuclear localization signal and RNA-binding (RRE) motif is present at residues 34–50 (TRKARRNRRRRWRARQR). Positions 73 to 84 (LQLPLLEKLHIN) match the Nuclear export signal and binding to XPO1 motif. The tract at residues 90–116 (GQGTEKGVGSPQISVESRAVLGSGTKE) is disordered. The residue at position 99 (S99) is a Phosphoserine; by host.

It belongs to the HIV-1 REV protein family. Homomultimer; when bound to the RRE. Multimeric assembly is essential for activity and may involve XPO1. Binds to human KPNB1, XPO1, TNPO1, RANBP5 and IPO7. Interacts with the viral Integrase. Interacts with human KHDRBS1. Interacts with human NAP1; this interaction decreases Rev multimerization and stimulates its activity. Interacts with human DEAD-box helicases DDX3 and DDX24; these interactions may serve for viral RNA export to the cytoplasm and packaging, respectively. Interacts with human PSIP1; this interaction may inhibit HIV-1 DNA integration by promoting dissociation of the Integrase-LEDGF/p75 complex. Post-translationally, asymmetrically arginine dimethylated at one site by host PRMT6. Methylation impairs the RNA-binding activity and export of viral RNA from the nucleus to the cytoplasm. Phosphorylated by protein kinase CK2. Presence of, and maybe binding to the N-terminus of the regulatory beta subunit of CK2 is necessary for CK2-mediated Rev's phosphorylation.

It is found in the host nucleus. It localises to the host nucleolus. Its subcellular location is the host cytoplasm. Escorts unspliced or incompletely spliced viral pre-mRNAs (late transcripts) out of the nucleus of infected cells. These pre-mRNAs carry a recognition sequence called Rev responsive element (RRE) located in the env gene, that is not present in fully spliced viral mRNAs (early transcripts). This function is essential since most viral proteins are translated from unspliced or partially spliced pre-mRNAs which cannot exit the nucleus by the pathway used by fully processed cellular mRNAs. Rev itself is translated from a fully spliced mRNA that readily exits the nucleus. Rev's nuclear localization signal (NLS) binds directly to KPNB1/Importin beta-1 without previous binding to KPNA1/Importin alpha-1. KPNB1 binds to the GDP bound form of RAN (Ran-GDP) and targets Rev to the nucleus. In the nucleus, the conversion from Ran-GDP to Ran-GTP dissociates Rev from KPNB1 and allows Rev's binding to the RRE in viral pre-mRNAs. Rev multimerization on the RRE via cooperative assembly exposes its nuclear export signal (NES) to the surface. Rev can then form a complex with XPO1/CRM1 and Ran-GTP, leading to nuclear export of the complex. Conversion from Ran-GTP to Ran-GDP mediates dissociation of the Rev/RRE/XPO1/RAN complex, so that Rev can return to the nucleus for a subsequent round of export. Beside KPNB1, also seems to interact with TNPO1/Transportin-1, RANBP5/IPO5 and IPO7/RANBP7 for nuclear import. The nucleoporin-like HRB/RIP is an essential cofactor that probably indirectly interacts with Rev to release HIV RNAs from the perinuclear region to the cytoplasm. In Human immunodeficiency virus type 1 group M subtype F2 (isolate MP257) (HIV-1), this protein is Protein Rev.